The primary structure comprises 466 residues: Cysteine--tRNA ligase (466 aa).

A Zn(2+)-binding site is contributed by Cys-28. The 'HIGH' region motif lies at 30–40 (PTVYNFFHIGN). Zn(2+)-binding residues include Cys-208, His-233, and Glu-237. The short motif at 265-269 (KMSKS) is the 'KMSKS' region element. Lys-268 contacts ATP.

It belongs to the class-I aminoacyl-tRNA synthetase family. As to quaternary structure, monomer. Requires Zn(2+) as cofactor.

The protein resides in the cytoplasm. It catalyses the reaction tRNA(Cys) + L-cysteine + ATP = L-cysteinyl-tRNA(Cys) + AMP + diphosphate. This is Cysteine--tRNA ligase from Clostridium perfringens (strain 13 / Type A).